A 331-amino-acid polypeptide reads, in one-letter code: Glyceraldehyde-3-phosphate dehydrogenase (331 aa).

Residues 12 to 13 (RI), aspartate 34, arginine 78, and threonine 120 each bind NAD(+). D-glyceraldehyde 3-phosphate-binding positions include 149-151 (SCT), threonine 180, 209-210 (TG), and arginine 232. Catalysis depends on cysteine 150, which acts as the Nucleophile. Asparagine 314 is a binding site for NAD(+).

This sequence belongs to the glyceraldehyde-3-phosphate dehydrogenase family. As to quaternary structure, homotetramer.

The protein resides in the cytoplasm. It catalyses the reaction D-glyceraldehyde 3-phosphate + phosphate + NAD(+) = (2R)-3-phospho-glyceroyl phosphate + NADH + H(+). Its pathway is carbohydrate degradation; glycolysis; pyruvate from D-glyceraldehyde 3-phosphate: step 1/5. In terms of biological role, catalyzes the oxidative phosphorylation of glyceraldehyde 3-phosphate (G3P) to 1,3-bisphosphoglycerate (BPG) using the cofactor NAD. The first reaction step involves the formation of a hemiacetal intermediate between G3P and a cysteine residue, and this hemiacetal intermediate is then oxidized to a thioester, with concomitant reduction of NAD to NADH. The reduced NADH is then exchanged with the second NAD, and the thioester is attacked by a nucleophilic inorganic phosphate to produce BPG. The chain is Glyceraldehyde-3-phosphate dehydrogenase (gapA) from Escherichia fergusonii (strain ATCC 35469 / DSM 13698 / CCUG 18766 / IAM 14443 / JCM 21226 / LMG 7866 / NBRC 102419 / NCTC 12128 / CDC 0568-73).